Reading from the N-terminus, the 177-residue chain is B-phycoerythrin beta chain (177 aa).

Phycourobilin-binding residues include Cys-50 and Cys-61. An N4-methylasparagine modification is found at Asn-72. (2R,3E)-phycoerythrobilin-binding residues include Cys-82 and Cys-158.

Belongs to the phycobiliprotein family. As to quaternary structure, heteromer of 6 alpha, 6 beta and one gamma chain. Contains two covalently linked phycoerythrobilin chromophores and one covalently linked phycourobilin chromophore.

Its subcellular location is the plastid. It is found in the chloroplast thylakoid membrane. In terms of biological role, light-harvesting photosynthetic bile pigment-protein from the phycobiliprotein complex. The chain is B-phycoerythrin beta chain (cpeB) from Porphyridium sordidum (Red alga).